A 427-amino-acid polypeptide reads, in one-letter code: 3-phosphoshikimate 1-carboxyvinyltransferase (427 aa).

K22, S23, and R27 together coordinate 3-phosphoshikimate. K22 is a phosphoenolpyruvate binding site. G93 and R122 together coordinate phosphoenolpyruvate. 4 residues coordinate 3-phosphoshikimate: S167, Q169, D315, and K342. Q169 provides a ligand contact to phosphoenolpyruvate. Residue D315 is the Proton acceptor of the active site. Phosphoenolpyruvate is bound by residues R346 and R387.

It belongs to the EPSP synthase family. Monomer.

The protein localises to the cytoplasm. It catalyses the reaction 3-phosphoshikimate + phosphoenolpyruvate = 5-O-(1-carboxyvinyl)-3-phosphoshikimate + phosphate. Its pathway is metabolic intermediate biosynthesis; chorismate biosynthesis; chorismate from D-erythrose 4-phosphate and phosphoenolpyruvate: step 6/7. Its function is as follows. Catalyzes the transfer of the enolpyruvyl moiety of phosphoenolpyruvate (PEP) to the 5-hydroxyl of shikimate-3-phosphate (S3P) to produce enolpyruvyl shikimate-3-phosphate and inorganic phosphate. The chain is 3-phosphoshikimate 1-carboxyvinyltransferase from Thermus thermophilus (strain ATCC BAA-163 / DSM 7039 / HB27).